The following is a 213-amino-acid chain: Outer envelope pore protein 24B, chloroplastic (213 aa).

The Cytoplasmic portion of the chain corresponds to 1-3; it reads MAM. The chain crosses the membrane as a beta stranded span at residues 4-13; it reads KASIKGKYDT. Residues 14-18 lie on the Chloroplast intermembrane side of the membrane; sequence DKTSG. Residues 19–28 traverse the membrane as a beta stranded segment; that stretch reads IGSLAFNAGD. Over 29–32 the chain is Cytoplasmic; sequence IKLR. Residues 33–42 traverse the membrane as a beta stranded segment; that stretch reads ATMTDATLVA. The Chloroplast intermembrane segment spans residues 43–55; that stretch reads GPTLTGLALAVEK. A beta stranded membrane pass occupies residues 56 to 64; sequence PGSFIVEYN. Residues 65–70 lie on the Cytoplasmic side of the membrane; the sequence is VPKKDV. A beta stranded transmembrane segment spans residues 71–80; sequence RFQFMNTVRI. The Chloroplast intermembrane portion of the chain corresponds to 81–93; the sequence is AEKPLNLTYIHSR. A beta stranded membrane pass occupies residues 94 to 103; sequence ADNRTIVDGS. The Cytoplasmic portion of the chain corresponds to 104 to 108; it reads LVIDS. Residues 109-118 traverse the membrane as a beta stranded segment; sequence ANKLSANHMV. At 119–122 the chain is on the chloroplast intermembrane side; it reads GTNN. A beta stranded membrane pass occupies residues 123-132; it reads CKIKYTYAHG. At 133 to 144 the chain is on the cytoplasmic side; that stretch reads GLATFEPCYDLA. The beta stranded transmembrane segment at 145–156 threads the bilayer; the sequence is KNTWDFAVSRRF. Residues 157–159 lie on the Chloroplast intermembrane side of the membrane; sequence YSG. A beta stranded transmembrane segment spans residues 160-168; the sequence is DNVRATYQT. The Cytoplasmic segment spans residues 169–170; that stretch reads SS. A beta stranded membrane pass occupies residues 171–179; sequence KLLGMEWSR. Residues 180 to 201 are Chloroplast intermembrane-facing; sequence NNKASGFKVCASVNLADELKTP. Residues 202-211 traverse the membrane as a beta stranded segment; the sequence is KLTAETTWNL. At 212-213 the chain is on the cytoplasmic side; the sequence is EM.

This sequence belongs to the plastid outer envelope porin OEP24 (TC 1.B.28) family. In terms of assembly, homooligomers form large rather nonselective pores in plastidial outer membranes.

The protein resides in the plastid. It localises to the etioplast membrane. It is found in the chloroplast outer membrane. Functionally, high-conductance voltage-dependent solute channel with a slight selectivity for cations transporting triosephosphates, dicarboxylic acids, ATP, inorganic phosphate (Pi), sugars, and positively or negatively charged amino acids. This Arabidopsis thaliana (Mouse-ear cress) protein is Outer envelope pore protein 24B, chloroplastic (OEP24B).